We begin with the raw amino-acid sequence, 120 residues long: uncharacterized protein (120 aa).

2 consecutive transmembrane segments (helical) span residues 26–46 and 57–77; these read PSTS…PAGM and LLFA…LTLV.

The protein localises to the membrane. This is an uncharacterized protein from Saccharomyces cerevisiae (strain ATCC 204508 / S288c) (Baker's yeast).